The sequence spans 466 residues: Glutamate--tRNA ligase 2 (466 aa).

The short motif at 11 to 21 (PSPTGFLHIGG) is the 'HIGH' region element. A 'KMSKS' region motif is present at residues 239-243 (KLSKR). K242 is a binding site for ATP.

Belongs to the class-I aminoacyl-tRNA synthetase family. Glutamate--tRNA ligase type 1 subfamily. Monomer.

The protein resides in the cytoplasm. It catalyses the reaction tRNA(Glu) + L-glutamate + ATP = L-glutamyl-tRNA(Glu) + AMP + diphosphate. Its function is as follows. Catalyzes the attachment of glutamate to tRNA(Glu) in a two-step reaction: glutamate is first activated by ATP to form Glu-AMP and then transferred to the acceptor end of tRNA(Glu). The polypeptide is Glutamate--tRNA ligase 2 (Roseobacter denitrificans (strain ATCC 33942 / OCh 114) (Erythrobacter sp. (strain OCh 114))).